The primary structure comprises 251 residues: Hydroxyacylglutathione hydrolase (251 aa).

7 residues coordinate Zn(2+): histidine 53, histidine 55, aspartate 57, histidine 58, histidine 110, aspartate 127, and histidine 165.

It belongs to the metallo-beta-lactamase superfamily. Glyoxalase II family. Monomer. Zn(2+) is required as a cofactor.

It catalyses the reaction an S-(2-hydroxyacyl)glutathione + H2O = a 2-hydroxy carboxylate + glutathione + H(+). Its pathway is secondary metabolite metabolism; methylglyoxal degradation; (R)-lactate from methylglyoxal: step 2/2. Thiolesterase that catalyzes the hydrolysis of S-D-lactoyl-glutathione to form glutathione and D-lactic acid. This chain is Hydroxyacylglutathione hydrolase, found in Pectobacterium atrosepticum (strain SCRI 1043 / ATCC BAA-672) (Erwinia carotovora subsp. atroseptica).